A 236-amino-acid chain; its full sequence is Orotidine 5'-phosphate decarboxylase (236 aa).

Residues D17, K39, 66-75 (DLKFHDIPNT), T125, R186, Q195, G215, and R216 contribute to the substrate site. Residue K68 is the Proton donor of the active site.

This sequence belongs to the OMP decarboxylase family. Type 1 subfamily. As to quaternary structure, homodimer.

The catalysed reaction is orotidine 5'-phosphate + H(+) = UMP + CO2. The protein operates within pyrimidine metabolism; UMP biosynthesis via de novo pathway; UMP from orotate: step 2/2. Its function is as follows. Catalyzes the decarboxylation of orotidine 5'-monophosphate (OMP) to uridine 5'-monophosphate (UMP). The chain is Orotidine 5'-phosphate decarboxylase from Buchnera aphidicola subsp. Schizaphis graminum (strain Sg).